The following is an 838-amino-acid chain: MGELFRSEEMTLAQLFLQSEAAYCCVSELEELGKVQFRDLNPDVNVFQRKFVNEVRRCEEMDRKLRFVEKEIRKANIPIMDTGENPEVPFPRDMIDLEANFEKIENELKEINTNQEALKRNFLELTELKFILRKTQQFFDEMADPDLLEESSSLLEPNEMGRGAPLRLGFVAGVINRERIPTFERMLWRVCRGNVFLRQAEIENPLEDPVTGDYVHKSVFIIFFQGDQLKNRVKKICEGFRASLYPCPETPQERKEMASGVNTRIDDLQMVLNQTEDHRQRVLQAAAKNIRVWFIKVRKMKAIYHTLNLCNIDVTQKCLIAEVWCPVTDLDSIQFALRRGTEHSGSTVPSILNRMQTNQTPPTYNKTNKFTHGFQNIVDAYGIGTYREINPAPYTVITFPFLFAVMFGDFGHGILMTLFAVWMVLRESRILSQKNENEMFSMVFSGRYIILLMGLFSIYTGLIYNDCFSKSLNIFGSSWSVRPMFTIGNWTEETLLGSSVLQLNPAIPGVFGGPYPFGIDPIWNIATNKLTFLNSFKMKMSVILGIIHMLFGVSLSLFNHIYFKKPLNIYFGFIPEIIFMSSLFGYLVILIFYKWTAYDAHSSRNAPSLLIHFINMFLFSYPESGNAMLYSGQKGIQCFLIVVAMLCVPWMLLFKPLILRHQYLRKKHLGTLNFGGIRVGNGPTEEDAEIIQHDQLSTHSEDAEEPTEDEVFDFGDTMVHQAIHTIEYCLGCISNTASYLRLWALSLAHAQLSEVLWTMVIHIGLHVRSLAGGLGLFFIFAAFATLTVAILLIMEGLSAFLHALRLHWVEFQNKFYTGTGFKFLPFSFEHIREGKFDE.

Topologically, residues 1–388 (MGELFRSEEM…DAYGIGTYRE (388 aa)) are cytoplasmic. 2 positions are modified to phosphothreonine: Thr250 and Thr360. At Tyr364 the chain carries Phosphotyrosine. Residues 389-407 (INPAPYTVITFPFLFAVMF) form a helical membrane-spanning segment. At 408–409 (GD) the chain is on the vacuolar side. Residues 410 to 426 (FGHGILMTLFAVWMVLR) traverse the membrane as a helical segment. The Cytoplasmic portion of the chain corresponds to 427 to 441 (ESRILSQKNENEMFS). The helical transmembrane segment at 442–471 (MVFSGRYIILLMGLFSIYTGLIYNDCFSKS) threads the bilayer. Residues 472–535 (LNIFGSSWSV…ATNKLTFLNS (64 aa)) lie on the Vacuolar side of the membrane. A helical membrane pass occupies residues 536–555 (FKMKMSVILGIIHMLFGVSL). Topologically, residues 556–573 (SLFNHIYFKKPLNIYFGF) are cytoplasmic. A helical membrane pass occupies residues 574-594 (IPEIIFMSSLFGYLVILIFYK). The Vacuolar segment spans residues 595–639 (WTAYDAHSSRNAPSLLIHFINMFLFSYPESGNAMLYSGQKGIQCF). The chain crosses the membrane as a helical span at residues 640 to 659 (LIVVAMLCVPWMLLFKPLIL). The Cytoplasmic segment spans residues 660–725 (RHQYLRKKHL…DTMVHQAIHT (66 aa)). The chain crosses the membrane as a helical span at residues 726-750 (IEYCLGCISNTASYLRLWALSLAHA). The Vacuolar portion of the chain corresponds to 751–771 (QLSEVLWTMVIHIGLHVRSLA). A helical transmembrane segment spans residues 772 to 810 (GGLGLFFIFAAFATLTVAILLIMEGLSAFLHALRLHWVE). At 811–838 (FQNKFYTGTGFKFLPFSFEHIREGKFDE) the chain is on the cytoplasmic side.

The protein belongs to the V-ATPase 116 kDa subunit family. V-ATPase is a heteromultimeric enzyme made up of two complexes: the ATP-hydrolytic V1 complex and the proton translocation V0 complex. The V1 complex consists of three catalytic AB heterodimers that form a heterohexamer, three peripheral stalks each consisting of EG heterodimers, one central rotor including subunits D and F, and the regulatory subunits C and H. The proton translocation complex V0 consists of the proton transport subunit a, a ring of proteolipid subunits c9c'', rotary subunit d, subunits e and f, and the accessory subunits ATP6AP1/Ac45 and ATP6AP2/PRR. Interacts with SPAAR. As to expression, expressed in brain (at protein level). In terms of tissue distribution, expressed in heart, kidney, liver, spleen, and to a lesser extent in brain.

The protein localises to the cytoplasmic vesicle. It localises to the clathrin-coated vesicle membrane. Its subcellular location is the secretory vesicle. It is found in the synaptic vesicle membrane. The protein resides in the melanosome. Its function is as follows. Subunit of the V0 complex of vacuolar(H+)-ATPase (V-ATPase), a multisubunit enzyme composed of a peripheral complex (V1) that hydrolyzes ATP and a membrane integral complex (V0) that translocates protons. V-ATPase is responsible for the acidification of various organelles, such as lysosomes, endosomes, the trans-Golgi network, and secretory granules, including synaptic vesicles. In certain cell types, can be exported to the plasma membrane, where it is involved in the acidification of the extracellular environment. Required for assembly and activity of the vacuolar ATPase. Through its action on compartment acidification, plays an essential role in neuronal development in terms of integrity and connectivity of neurons. This is V-type proton ATPase 116 kDa subunit a 1 (Atp6v0a1) from Rattus norvegicus (Rat).